We begin with the raw amino-acid sequence, 83 residues long: Beta-toxin Ct7 (83 aa).

A signal peptide spans M1 to C18. In terms of domain architecture, LCN-type CS-alpha/beta spans K19–G81. 4 cysteine pairs are disulfide-bonded: C29–C80, C33–C54, C40–C61, and C44–C63. G81 bears the Glycine amide mark. G82 is a propeptide.

It belongs to the long (4 C-C) scorpion toxin superfamily. Sodium channel inhibitor family. Beta subfamily. In terms of tissue distribution, expressed by the venom gland.

Its subcellular location is the secreted. Beta toxins bind voltage-independently at site-4 of sodium channels (Nav) and shift the voltage of activation toward more negative potentials thereby affecting sodium channel activation and promoting spontaneous and repetitive firing. Is possibly toxic to mice, freshwater shrimp and crickets. This Centruroides tecomanus (Scorpion) protein is Beta-toxin Ct7.